The primary structure comprises 880 residues: Interference hedgehog (880 aa).

Positions 1 to 20 (MTLLTSSLLFFSLLTSRLEA) are cleaved as a signal peptide. Over 21–703 (IPVLEKSPAH…ETFNMSPMLT (683 aa)) the chain is Extracellular. 4 consecutive Ig-like C2-type domains span residues 45–142 (PGVR…IARL), 132–234 (PLVV…IQLT), 252–340 (PHLL…YIKV), and 346–432 (PQIV…LQVN). Disulfide bonds link Cys-68-Cys-126, Cys-173-Cys-220, Cys-276-Cys-324, and Cys-367-Cys-414. N-linked (GlcNAc...) asparagine glycosylation is found at Asn-102 and Asn-209. The tract at residues 426–467 (GTLLQVNPKQIQEPRESGGTHRPKPNQGSKQKQMYPPTPPNV) is disordered. Fibronectin type-III domains follow at residues 461–567 (PPTP…LQPG) and 575–670 (VPEL…TQRP). An N-linked (GlcNAc...) asparagine glycan is attached at Asn-466. Heparin-binding residues include Arg-497, Lys-501, Lys-503, and Arg-541. The N-linked (GlcNAc...) asparagine glycan is linked to Asn-557. The interval 662–697 (LKQGRTQRPKTSTTEEPTLQMGDRDTTTPSHNETFN) is disordered. Polar residues-rich tracts occupy residues 665 to 678 (GRTQRPKTSTTEEP) and 688 to 697 (TTPSHNETFN). N-linked (GlcNAc...) asparagine glycosylation occurs at Asn-693. A helical membrane pass occupies residues 704 to 724 (GTIGGGAVLILLLISTCLCVC). The Cytoplasmic portion of the chain corresponds to 725–880 (RRRSSRSRGN…SSGSLNSVGV (156 aa)). 2 disordered regions span residues 728 to 762 (SSRSRGNNPNKPRMAELRDDFVPLGNCSPTKQRQR) and 775 to 880 (QQQQ…SVGV). Low complexity-rich tracts occupy residues 823–837 (RAGGSNGSNNGNNNN) and 864–880 (SSRSENLSSGSLNSVGV).

This sequence belongs to the immunoglobulin superfamily. IHOG family. Homodimer. Heterotetramer; 2 iHog chains bind 2 hh chains when facilitated by heparin, heparin is required to promote high-affinity interactions between hh and iHog.

The protein localises to the membrane. Mediates response to the active Hedgehog (Hh) protein signal in embryos, functioning upstream or at the level of patched (ptc). This is Interference hedgehog from Drosophila yakuba (Fruit fly).